The chain runs to 208 residues: V-type proton ATPase subunit E (208 aa).

This sequence belongs to the V-ATPase E subunit family.

Its function is as follows. Produces ATP from ADP in the presence of a proton gradient across the membrane. In Chlamydia trachomatis serovar L2 (strain ATCC VR-902B / DSM 19102 / 434/Bu), this protein is V-type proton ATPase subunit E.